We begin with the raw amino-acid sequence, 234 residues long: MTNPISQAAGALSQDELKTLVGQAALQYVAPGEIVGVGTGSTVNKFIDALASIRHLIKGAVSSSEASTLRLKALGIPVFDANEVAELSVYIDGADEIDGHGNMIKGGGAALTREKIVAALANQFVCIADESKLVQTLGRYPLPVEIIPMAAQRITQQFAALGGRAQVRLKGDQPLVTDNGQILLDVTGLQISDPLAFETLVSQWPGVVTVGVFAYQKAQVCLLGTARGVKTLTF.

Substrate-binding positions include T39 to T42, D92 to D95, and K105 to G108. The Proton acceptor role is filled by E114. A substrate-binding site is contributed by K132.

It belongs to the ribose 5-phosphate isomerase family. Homodimer.

The enzyme catalyses aldehydo-D-ribose 5-phosphate = D-ribulose 5-phosphate. Its pathway is carbohydrate degradation; pentose phosphate pathway; D-ribose 5-phosphate from D-ribulose 5-phosphate (non-oxidative stage): step 1/1. Its function is as follows. Catalyzes the reversible conversion of ribose-5-phosphate to ribulose 5-phosphate. This Albidiferax ferrireducens (strain ATCC BAA-621 / DSM 15236 / T118) (Rhodoferax ferrireducens) protein is Ribose-5-phosphate isomerase A.